The following is a 247-amino-acid chain: UPF0309 protein Teth39_1980 (247 aa).

The SIS domain occupies 31 to 213 (IANSLLKEED…EAEIVFIMIK (183 aa)).

It belongs to the UPF0309 family.

The chain is UPF0309 protein Teth39_1980 from Thermoanaerobacter pseudethanolicus (strain ATCC 33223 / 39E) (Clostridium thermohydrosulfuricum).